Here is a 380-residue protein sequence, read N- to C-terminus: MAIEMLGLILAGGQGTRLGKLTKDVAKPAVPFGGRYRIIDFALSNCANSNVKNVGVITQYQPLTLNAHIGNGAPWGLNGINSGVTILQPYSSQEGSKWFEGTSHAVYQNISYIDQQNPEYVLILSGDHIYKMDYEAMLESHKEREASLTVSVMEVPLEEASRFGIMNTDDNDRIIEFEEKPKEPKSNLASMGIYIFNWKRLREVLVNGYSKGNPMEDFGGDVIPAYIEAGENVFAYRFKGYWKDVGTIDSLHQSSMEFLDLNNELNITDKSWRIYSHNDISAPQFITEKSNVKNALVGDGCYVDGTVLHSILSQNVHVQEGTVIEDSFIMSGTFIGENVTIKNAIIGENAKIGDNVEIIGENEVAVIGHGEIKGENKNEQ.

Alpha-D-glucose 1-phosphate-binding positions include G164, 179–180 (EK), and S190.

Belongs to the bacterial/plant glucose-1-phosphate adenylyltransferase family. Homotetramer.

The catalysed reaction is alpha-D-glucose 1-phosphate + ATP + H(+) = ADP-alpha-D-glucose + diphosphate. It functions in the pathway glycan biosynthesis; glycogen biosynthesis. Functionally, involved in the biosynthesis of ADP-glucose, a building block required for the elongation reactions to produce glycogen. Catalyzes the reaction between ATP and alpha-D-glucose 1-phosphate (G1P) to produce pyrophosphate and ADP-Glc. In Lactococcus lactis subsp. lactis (strain IL1403) (Streptococcus lactis), this protein is Glucose-1-phosphate adenylyltransferase.